We begin with the raw amino-acid sequence, 142 residues long: Large ribosomal subunit protein uL11 (142 aa).

This sequence belongs to the universal ribosomal protein uL11 family. In terms of assembly, part of the ribosomal stalk of the 50S ribosomal subunit. Interacts with L10 and the large rRNA to form the base of the stalk. L10 forms an elongated spine to which L12 dimers bind in a sequential fashion forming a multimeric L10(L12)X complex. One or more lysine residues are methylated.

Functionally, forms part of the ribosomal stalk which helps the ribosome interact with GTP-bound translation factors. This chain is Large ribosomal subunit protein uL11, found in Beijerinckia indica subsp. indica (strain ATCC 9039 / DSM 1715 / NCIMB 8712).